The chain runs to 200 residues: Probable nicotinate-nucleotide adenylyltransferase (200 aa).

It belongs to the NadD family.

The enzyme catalyses nicotinate beta-D-ribonucleotide + ATP + H(+) = deamido-NAD(+) + diphosphate. It participates in cofactor biosynthesis; NAD(+) biosynthesis; deamido-NAD(+) from nicotinate D-ribonucleotide: step 1/1. In terms of biological role, catalyzes the reversible adenylation of nicotinate mononucleotide (NaMN) to nicotinic acid adenine dinucleotide (NaAD). The sequence is that of Probable nicotinate-nucleotide adenylyltransferase from Leifsonia xyli subsp. xyli (strain CTCB07).